Here is a 99-residue protein sequence, read N- to C-terminus: Acylphosphatase (99 aa).

An Acylphosphatase-like domain is found at 10–99 (RLTAFVHGHV…PRGVEGFTER (90 aa)). Active-site residues include R25 and N43.

This sequence belongs to the acylphosphatase family.

The catalysed reaction is an acyl phosphate + H2O = a carboxylate + phosphate + H(+). This is Acylphosphatase (acyP) from Corynebacterium efficiens (strain DSM 44549 / YS-314 / AJ 12310 / JCM 11189 / NBRC 100395).